A 680-amino-acid polypeptide reads, in one-letter code: Zinc finger protein 334 (680 aa).

Residues 10-81 form the KRAB domain; it reads VSFQDLTVNF…EEFSNQNYPD (72 aa). C2H2-type zinc fingers lie at residues 237–259, 265–287, 293–315, 321–343, 349–371, 377–399, 405–427, 433–455, 461–483, 544–566, 572–594, 600–622, 628–650, and 656–678; these read NECNECRKTFSKRSTLIVHQRIH, YVCSDCRKTFRVKTSLTRHRRIH, YECSECRKTFIDKSALIVHQKIH, YECNECGKTFFRKSALAEHFRSH, YECKECGNAFSKKSYLVVHQRTH, NECKECGKTFFCQSALTAHQRIH, YECSECEKTFFCQSALNVHRRSH, YECSQCGKFLCTKSALIAHQITH, YECNECGKFFCHKSTLTIHQRTH, YECNECGRTYCRKSALTHHQRTH, YECNECGKTFCQKFSFVEHQRTH, YECNECGKSFCHKSAFRVHRRIH, YECNQCGKTYRRLWTLTEHQKIH, and YECNKCEKTFRHKSNFLLHQKSH.

It belongs to the krueppel C2H2-type zinc-finger protein family.

The protein resides in the nucleus. Functionally, may be involved in transcriptional regulation. In Homo sapiens (Human), this protein is Zinc finger protein 334 (ZNF334).